The primary structure comprises 217 residues: AFG2-interacting ribosome maturation factor (217 aa).

Part of the 55LCC heterohexameric ATPase complex composed at least of AIRIM, AFG2A, AFG2B and CINP. Does not associate with pre-60S ribosomal particles. Phosphorylated on serines by CK2 kinase.

It localises to the nucleus. It is found in the cytoplasm. Its function is as follows. Part of the 55LCC heterohexameric ATPase complex which is chromatin-associated and promotes replisome proteostasis to maintain replication fork progression and genome stability. Required for replication fork progression, sister chromatid cohesion, and chromosome stability. The ATPase activity is specifically enhanced by replication fork DNA and is coupled to cysteine protease-dependent cleavage of replisome substrates in response to replication fork damage. Uses ATPase activity to process replisome substrates in S-phase, facilitating their proteolytic turnover from chromatin to ensure DNA replication and mitotic fidelity. Involved in the cytoplasmic maturation steps of pre-60S ribosomal particles by promoting the release of shuttling protein RSL24D1/RLP24 from the pre-ribosomal particles. This Mus musculus (Mouse) protein is AFG2-interacting ribosome maturation factor (Airim).